The sequence spans 94 residues: Pyrimidine/purine nucleoside phosphorylase (94 aa).

The protein belongs to the nucleoside phosphorylase PpnP family.

The catalysed reaction is a purine D-ribonucleoside + phosphate = a purine nucleobase + alpha-D-ribose 1-phosphate. It catalyses the reaction adenosine + phosphate = alpha-D-ribose 1-phosphate + adenine. The enzyme catalyses cytidine + phosphate = cytosine + alpha-D-ribose 1-phosphate. It carries out the reaction guanosine + phosphate = alpha-D-ribose 1-phosphate + guanine. The catalysed reaction is inosine + phosphate = alpha-D-ribose 1-phosphate + hypoxanthine. It catalyses the reaction thymidine + phosphate = 2-deoxy-alpha-D-ribose 1-phosphate + thymine. The enzyme catalyses uridine + phosphate = alpha-D-ribose 1-phosphate + uracil. It carries out the reaction xanthosine + phosphate = alpha-D-ribose 1-phosphate + xanthine. Its function is as follows. Catalyzes the phosphorolysis of diverse nucleosides, yielding D-ribose 1-phosphate and the respective free bases. Can use uridine, adenosine, guanosine, cytidine, thymidine, inosine and xanthosine as substrates. Also catalyzes the reverse reactions. The chain is Pyrimidine/purine nucleoside phosphorylase from Klebsiella pneumoniae (strain 342).